The chain runs to 467 residues: UDP-N-acetylmuramate--L-alanine ligase (467 aa).

114–120 (GTHGKTT) is a binding site for ATP.

It belongs to the MurCDEF family.

It is found in the cytoplasm. It catalyses the reaction UDP-N-acetyl-alpha-D-muramate + L-alanine + ATP = UDP-N-acetyl-alpha-D-muramoyl-L-alanine + ADP + phosphate + H(+). It functions in the pathway cell wall biogenesis; peptidoglycan biosynthesis. Functionally, cell wall formation. This chain is UDP-N-acetylmuramate--L-alanine ligase, found in Nitrobacter hamburgensis (strain DSM 10229 / NCIMB 13809 / X14).